The following is a 914-amino-acid chain: DENN domain-containing protein 2C (914 aa).

Residues 46-98 form a disordered region; that stretch reads FGVRYNCHQESPPHKRPTGEERNGALPRNTDVKSRDQSEDEGEGGECRGSHPS. Basic and acidic residues predominate over residues 56–68; that stretch reads SPPHKRPTGEERN. A Phosphoserine modification is found at S261. A disordered region spans residues 411–446; sequence GKKRVKLQPYTGKEAPSSKGETSGNESDAEYLPKNR. Positions 480–627 constitute a uDENN domain; sequence ELFVVVSLQK…PFPAPGRTIT (148 aa). Residues 649 to 782 enclose the cDENN domain; sequence RLEHVDFECL…LQAALVQILE (134 aa). In terms of domain architecture, dDENN spans 784–874; sequence RDEVLAQEQQ…QDRELRQSGV (91 aa).

Its function is as follows. Guanine nucleotide exchange factor (GEF) which may activate RAB9A and RAB9B. Promotes the exchange of GDP to GTP, converting inactive GDP-bound Rab proteins into their active GTP-bound form. The polypeptide is DENN domain-containing protein 2C (Dennd2c) (Mus musculus (Mouse)).